The following is a 58-amino-acid chain: Alpha-conotoxin-like Pu1.6 (58 aa).

The N-terminal stretch at Met-1 to Ser-17 is a signal peptide. The propeptide occupies Thr-18–Arg-35. 2 disulfides stabilise this stretch: Cys-44-Cys-50 and Cys-45-Cys-58. Residues Thr-46–Pro-48 are lacks the Ser-Xaa-Pro motif that is crucial for potent interaction with nAChR.

The protein belongs to the conotoxin A superfamily. In terms of tissue distribution, expressed by the venom duct.

The protein resides in the secreted. Its function is as follows. Alpha-conotoxins act on postsynaptic membranes, they bind to the nicotinic acetylcholine receptors (nAChR) and thus inhibit them. Has possibly a distinct nAChR binding mode from other alpha-conotoxins, due to a different three residue motif (lacks the Ser-Xaa-Pro motif). This chain is Alpha-conotoxin-like Pu1.6, found in Conus pulicarius (Flea-bitten cone).